A 658-amino-acid chain; its full sequence is Putative phospholipase B-like lamina ancestor (658 aa).

The first 29 residues, 1-29, serve as a signal peptide directing secretion; that stretch reads MLKVVGASWQKTRIGTYILIGAGLLVIGA. N-linked (GlcNAc...) asparagine glycosylation is found at Asn229, Asn465, and Asn486.

It belongs to the phospholipase B-like family. As to expression, expressed in neural and glial progenitors prior to, but not after, differentiation. Not expressed in late third instar disks, but is expressed uniformly by early third instar disks, in the imaginal ring of the proventriculus and in the salivary gland.

The protein localises to the secreted. In terms of biological role, putative phospholipase. Involved in the regulation of cellular plasticity in imaginal disks. In Drosophila melanogaster (Fruit fly), this protein is Putative phospholipase B-like lamina ancestor (lama).